A 133-amino-acid chain; its full sequence is 6,7-dimethyl-8-ribityllumazine synthase (133 aa).

5-amino-6-(D-ribitylamino)uracil contacts are provided by residues Phe11, Ala43–Asp45, and Ala67–Val69. (2S)-2-hydroxy-3-oxobutyl phosphate is bound at residue Asp72–Thr73. His75 acts as the Proton donor in catalysis. Phe100 is a binding site for 5-amino-6-(D-ribitylamino)uracil. Arg115 is a binding site for (2S)-2-hydroxy-3-oxobutyl phosphate.

It belongs to the DMRL synthase family.

The catalysed reaction is (2S)-2-hydroxy-3-oxobutyl phosphate + 5-amino-6-(D-ribitylamino)uracil = 6,7-dimethyl-8-(1-D-ribityl)lumazine + phosphate + 2 H2O + H(+). It functions in the pathway cofactor biosynthesis; riboflavin biosynthesis; riboflavin from 2-hydroxy-3-oxobutyl phosphate and 5-amino-6-(D-ribitylamino)uracil: step 1/2. In terms of biological role, catalyzes the formation of 6,7-dimethyl-8-ribityllumazine by condensation of 5-amino-6-(D-ribitylamino)uracil with 3,4-dihydroxy-2-butanone 4-phosphate. This is the penultimate step in the biosynthesis of riboflavin. The chain is 6,7-dimethyl-8-ribityllumazine synthase from Halobacterium salinarum (strain ATCC 29341 / DSM 671 / R1).